Here is a 378-residue protein sequence, read N- to C-terminus: MFKPIRKTHPLISIANNALVDLPAPSNISAWWNFGSLLGLCLMLQILTGLFLAMHYAADIETAFNSVNHICRDVNNGWFLRICHANGASFFFACLFMHVGRGVYYESYLYHMTWNTGVIILFLTMATGFLGYVLPWGQMSFWGATVITNLLSAVPYLGMDLVQWIWGGFAVDNTTLTRFFTFHFIFPFIILALMMIHLLFLHQTGSNNPLGLNSNVDKIPFHPYFIYKDIFGFIVFYWILIRFIWKFNYLLMDPENFIPANPLVTPVHIQPEWYFLFAYAILRSIPNKLGGVIALVLSIAILLILPFTHSSKFRGLQFYPLNQILFWNMVVVASLLTWIGARPVEDPYVLTGQILTVLYFSYFIINPLLAKYWDKLLN.

The next 4 membrane-spanning stretches (helical) occupy residues 34–54 (FGSLLGLCLMLQILTGLFLAM), 78–99 (WFLRICHANGASFFFACLFMHV), 114–134 (WNTGVIILFLTMATGFLGYVL), and 179–199 (FFTFHFIFPFIILALMMIHLL). Residues H84 and H98 each coordinate heme b. Heme b contacts are provided by H183 and H197. H202 serves as a coordination point for a ubiquinone. A run of 4 helical transmembrane segments spans residues 227-247 (YKDIFGFIVFYWILIRFIWKF), 289-309 (LGGVIALVLSIAILLILPFTH), 321-341 (LNQILFWNMVVVASLLTWIGA), and 348-368 (YVLTGQILTVLYFSYFIINPL).

The protein belongs to the cytochrome b family. In terms of assembly, the main subunits of complex b-c1 are: cytochrome b, cytochrome c1 and the Rieske protein. Heme b is required as a cofactor.

The protein localises to the mitochondrion inner membrane. Its function is as follows. Component of the ubiquinol-cytochrome c reductase complex (complex III or cytochrome b-c1 complex) that is part of the mitochondrial respiratory chain. The b-c1 complex mediates electron transfer from ubiquinol to cytochrome c. Contributes to the generation of a proton gradient across the mitochondrial membrane that is then used for ATP synthesis. This chain is Cytochrome b (MT-CYB), found in Anopheles quadrimaculatus (Common malaria mosquito).